A 622-amino-acid chain; its full sequence is V-type ATP synthase subunit I 1 (622 aa).

Helical transmembrane passes span Trp306–Val326, Ile328–Gly348, Pro373–Cys393, Gln428–Val448, Ala459–Val479, Pro485–Val505, Val532–Ile552, and Pro562–Leu582.

It belongs to the V-ATPase 116 kDa subunit family.

It is found in the cell membrane. Its function is as follows. Produces ATP from ADP in the presence of a proton gradient across the membrane. The chain is V-type ATP synthase subunit I 1 (atpI1) from Treponema pallidum (strain Nichols).